Reading from the N-terminus, the 451-residue chain is NAC domain containing protein 52 (451 aa).

The segment at 1 to 21 (MGRESVAVVTAPPSATAPGTA) is disordered. In terms of domain architecture, NAC spans 27–178 (LAPGFRFHPT…AYVLCRVFHK (152 aa)). Residues 126–184 (LGMKKTLVFHSGRAPDGLRTNWVMHEYRLVEYETEKNGNLVQDAYVLCRVFHKNNIGPP) mediate DNA binding. Disordered stretches follow at residues 255–337 (DQQN…TTTT) and 370–400 (KKEK…KVND). Residues 256-270 (QQNHHENDLKPEEHN) are compositionally biased toward basic and acidic residues. Residues 272-292 (NNNYDENEETLKREQMEEEER) are a coiled coil. The segment covering 318–337 (ESNNNSSRNTQDHCSSTTTT) has biased composition (low complexity). Positions 370-384 (KKEKPQQPLRPHKEP) are enriched in basic and acidic residues. Positions 398–446 (VNDLQKEIHQMSVERETFKLEMMSAEAMISILQSRIDALRQENEELKKN) form a coiled coil.

Interacts with JMJ14 and NAC050. Mostly expressed in floral organs, and, at low levels, in other organs.

Its subcellular location is the nucleus. Transcriptional repressor that binds to the motif 5'-(C/T)A(C/A)G-3' in the promoter of target genes. Also binds to the 5'-CTTGNNNNNCAAG-3' consensus sequence in chromatin. Can bind to the mitochondrial dysfunction motif (MDM) present in the upstream regions of mitochondrial dysfunction stimulon (MDS) genes involved in mitochondrial retrograde regulation (MRR). Together with NAC050 and JMJ14, regulates gene expression and flowering time by associating with the histone demethylase JMJ14, probably by the promotion of RNA-mediated gene silencing. Regulates siRNA-dependent post-transcriptional gene silencing (PTGS) through SGS3 expression modulation. Required during pollen development. In Arabidopsis thaliana (Mouse-ear cress), this protein is NAC domain containing protein 52.